The following is a 224-amino-acid chain: PKHD-type hydroxylase Sbal_3634 (224 aa).

Residues 78 to 176 (QFYPPLFNRY…RTAAFMWLQS (99 aa)) form the Fe2OG dioxygenase domain. Fe cation is bound by residues His96, Asp98, and His157. Arg167 lines the 2-oxoglutarate pocket.

It depends on Fe(2+) as a cofactor. L-ascorbate serves as cofactor.

This chain is PKHD-type hydroxylase Sbal_3634, found in Shewanella baltica (strain OS155 / ATCC BAA-1091).